A 638-amino-acid polypeptide reads, in one-letter code: MGKIIGIDLGTTNSCVSVFEGNEPVVIANSEGKRTTPSIVAFVDGGERKVGDPAKRQAITNPQRTIFSIKRFMGETWDQVQKETARVPYKVVKGDNNTPRVDIDGRLYTPQEISAMILQKMKKTAEDYLGQEVTEAVITVPAYFSDSQRQATKEAGQIAGLEVKRIVNEPTAAALAYGLDKAHKDMKIAVFDLGGGTFDISILEFGGGVFEVLSTNGDTHLGGDDFDQVIIDWLVQEFKNDEGADLTKDPMAMQRLKEAAEKAKIELSSSTSTEINLPYIMPVDGMPKHLVKTLTRAKFEALAHNLIQACLEPCKKAMSDAGLSNSDIDEVILVGGSSRIPAVQELVEKFFGKTPSKGVNPDEVVAVGAAVQGAVLTDEIKGVVLLDVTPLSMGIETLGGVMTKLIDANTTIPARKSETFSTAADNQTEVTIHVLQGERPMAAQNKSIGQFNLTGIAPARRGVPQIEVTFDIDANGILKVSAKDKATGKEQAIRIEASSGLSKEEIEKMKAEAEANAEADKKEREKIDKLNQADSMIFSTENQLKELGDKLPADKKAPIEAALQKLKDAHKAQDLSAIDTAMAELNTAFQAASAEMYAQSGAQGGAQAGPGAGAGQQANQGSSNNKEDIQDADFEEVK.

At threonine 197 the chain carries Phosphothreonine; by autocatalysis. Residues serine 600–lysine 638 form a disordered region. The segment covering alanine 602 to alanine 614 has biased composition (gly residues). The segment covering glycine 615 to asparagine 624 has biased composition (low complexity). Residues asparagine 625 to lysine 638 are compositionally biased toward basic and acidic residues.

This sequence belongs to the heat shock protein 70 family.

Acts as a chaperone. The polypeptide is Chaperone protein DnaK (Phocaeicola vulgatus (strain ATCC 8482 / DSM 1447 / JCM 5826 / CCUG 4940 / NBRC 14291 / NCTC 11154) (Bacteroides vulgatus)).